We begin with the raw amino-acid sequence, 408 residues long: Multifunctional CCA protein (408 aa).

ATP is bound by residues G8 and R11. Positions 8 and 11 each coordinate CTP. Positions 21 and 23 each coordinate Mg(2+). ATP is bound by residues R91, R137, and R140. R91, R137, and R140 together coordinate CTP. An HD domain is found at 228 to 329; it reads TGVHVLSVLE…LELLQSFDVY (102 aa).

This sequence belongs to the tRNA nucleotidyltransferase/poly(A) polymerase family. Bacterial CCA-adding enzyme type 1 subfamily. Monomer. Can also form homodimers and oligomers. Requires Mg(2+) as cofactor. Ni(2+) serves as cofactor.

The catalysed reaction is a tRNA precursor + 2 CTP + ATP = a tRNA with a 3' CCA end + 3 diphosphate. It carries out the reaction a tRNA with a 3' CCA end + 2 CTP + ATP = a tRNA with a 3' CCACCA end + 3 diphosphate. In terms of biological role, catalyzes the addition and repair of the essential 3'-terminal CCA sequence in tRNAs without using a nucleic acid template. Adds these three nucleotides in the order of C, C, and A to the tRNA nucleotide-73, using CTP and ATP as substrates and producing inorganic pyrophosphate. tRNA 3'-terminal CCA addition is required both for tRNA processing and repair. Also involved in tRNA surveillance by mediating tandem CCA addition to generate a CCACCA at the 3' terminus of unstable tRNAs. While stable tRNAs receive only 3'-terminal CCA, unstable tRNAs are marked with CCACCA and rapidly degraded. The chain is Multifunctional CCA protein from Pseudomonas syringae pv. syringae (strain B728a).